A 372-amino-acid chain; its full sequence is MASATSTPTIADGNSNKESVATSRSPHTHDLNFELPEEYEMINLIGQGAYGVVCAALHKPSGLKVAVKKIHPFNHPVFCLRTLREIKLLRHFRHENIISILDILPPPSYQELEDVYIVQELMETDLYRVIRSQPLSDDHCQYFTYQILRALKAMHSAGVVHRDLKPSNLLLNANCDLKVADFGLARSTTAQGGNPGFMTEYVATRWYRAPEIMLSFREYSKAIDLWSTGCILAEMLSARPLFPGKDYHSQITLILNILGTPTMDDFSRIKSARARKYIKSLPFTPKVSFKALFPQASPDAIDLLEKLLTFNPDKRITAEEALKHPYVAAYHDASDEPTASPMPPNLVDLYCNKEDLEIPVLKALIFREVNFR.

Polar residues predominate over residues 1 to 25 (MASATSTPTIADGNSNKESVATSRS). Residues 1–29 (MASATSTPTIADGNSNKESVATSRSPHTH) are disordered. A Protein kinase domain is found at 39-327 (YEMINLIGQG…AEEALKHPYV (289 aa)). ATP-binding positions include 45–53 (IGQGAYGVV) and Lys68. The active-site Proton acceptor is Asp163. The residue at position 199 (Thr199) is a Phosphothreonine. Positions 199–201 (TEY) match the TXY motif. Tyr201 carries the phosphotyrosine modification.

The protein belongs to the protein kinase superfamily. CMGC Ser/Thr protein kinase family. MAP kinase subfamily. It depends on Mg(2+) as a cofactor. In terms of processing, dually phosphorylated on Thr-199 and Tyr-201, which activates the enzyme.

The protein resides in the nucleus. It carries out the reaction L-seryl-[protein] + ATP = O-phospho-L-seryl-[protein] + ADP + H(+). The enzyme catalyses L-threonyl-[protein] + ATP = O-phospho-L-threonyl-[protein] + ADP + H(+). Its activity is regulated as follows. Activated by tyrosine and threonine phosphorylation. Functionally, involved in mating signal transduction pathway. The sequence is that of Mitogen-activated protein kinase spk1 (spk1) from Schizosaccharomyces pombe (strain 972 / ATCC 24843) (Fission yeast).